The primary structure comprises 96 residues: Antitoxin TacA3 (96 aa).

Residues 61-96 (YLTERDTKMIMEILDNPPAPNEKLLAAAFALPDMKK) form a neutralization domain region.

This sequence belongs to the TacA antitoxin family. In terms of assembly, forms a complex with cognate toxin TacT3. Forms a 4:2 antitoxin:toxin complex with cognate toxin TacT3. Forms a 4:4 antitoxin:toxin complex with promoter DNA, where 2 TacT3 dimers bridge 2 TacA3 dimers. Only TacA3 contacts promoter DNA.

Antitoxin component of a type II toxin-antitoxin (TA) system. Counteracts the toxic effect of cognate toxin TacT3, but not TacT1 or TacT2. Plays a role in persister cell formation. Functionally, the TacA3-TacT3 complex both represses and derepresses expression of its own operon. The hexameric 4:2 TacA3-TacT3 complex binds promoter DNA and represses its transcription; both subunits are required. The octomeric 4:4 TacA3-TacT3 complex derepresses the operon. The shift from hexameric to octomeric complex probably alters DNA-binding, leading to dissociation from the operator DNA and derepression. Does not bind the promoter of the TacA1-TacT1 operon. This is Antitoxin TacA3 from Salmonella typhimurium (strain 14028s / SGSC 2262).